The following is a 165-amino-acid chain: MTVTLNRGSITSLMSSSQAVSTLQPVASELKTQLENKLKSESAEKTREVLWQQYYASNPPDHAVLEVLATPVREALLARFGQHQGSVVPAIDLPELRSVLQQFDSFGKRWEAILLQVLEGIKPNESQVGLPYLSELINKELMILLPSNSIVDSLLHNSHQIDMDT.

This sequence belongs to the YopR family.

It localises to the secreted. Functionally, may be involved in the regulation of the assembly of the type III secretion system (T3SS), also called injectisome, which is used to inject bacterial effector proteins into eukaryotic host cells. May control the secretion and/or polymerization of YscF/SctF, the principal component of the needle filament, thereby impacting the assembly of the T3SS. Involved in pathogenesis. The chain is Type 3 secretion system regulator YopR from Yersinia pestis.